Here is a 721-residue protein sequence, read N- to C-terminus: Dipeptidyl-peptidase 5 (721 aa).

The first 18 residues, 1-18, serve as a signal peptide directing secretion; it reads MGAFRWLSIAAAASTALA. N-linked (GlcNAc...) asparagine glycosylation is found at Asn75, Asn94, Asn151, and Asn254. Residues 271–297 form a disordered region; sequence ARPINGPDSPGTPKGIKGDSSSPVFSP. N-linked (GlcNAc...) asparagine glycosylation is found at Asn380 and Asn450. Catalysis depends on Ser560, which acts as the Charge relay system. A glycan (N-linked (GlcNAc...) asparagine) is linked at Asn607. Catalysis depends on charge relay system residues Asp643 and His675.

It belongs to the peptidase S9C family. Post-translationally, N-glycosylated. In terms of tissue distribution, expressed in mycelia and conidia.

Its subcellular location is the secreted. In terms of biological role, may be involved in metabolism of dipeptides or may affect host defense mechanisms. Has a substrate specificity limited to the hydrolysis of X-Ala, His-Ser, and Ser-Tyr dipeptides at a neutral pH optimum. This is Dipeptidyl-peptidase 5 from Aspergillus fumigatus (strain ATCC MYA-4609 / CBS 101355 / FGSC A1100 / Af293) (Neosartorya fumigata).